Consider the following 281-residue polypeptide: Bifunctional protein FolD (281 aa).

NADP(+) contacts are provided by residues 161-163 (GRS), Ser-186, and Ile-227.

It belongs to the tetrahydrofolate dehydrogenase/cyclohydrolase family. In terms of assembly, homodimer.

The catalysed reaction is (6R)-5,10-methylene-5,6,7,8-tetrahydrofolate + NADP(+) = (6R)-5,10-methenyltetrahydrofolate + NADPH. It carries out the reaction (6R)-5,10-methenyltetrahydrofolate + H2O = (6R)-10-formyltetrahydrofolate + H(+). The protein operates within one-carbon metabolism; tetrahydrofolate interconversion. Its function is as follows. Catalyzes the oxidation of 5,10-methylenetetrahydrofolate to 5,10-methenyltetrahydrofolate and then the hydrolysis of 5,10-methenyltetrahydrofolate to 10-formyltetrahydrofolate. The polypeptide is Bifunctional protein FolD (Brachyspira hyodysenteriae (strain ATCC 49526 / WA1)).